The following is a 288-amino-acid chain: Diaminopimelate epimerase (288 aa).

Residues asparagine 13, glutamine 46, and asparagine 66 each contribute to the substrate site. Cysteine 75 acts as the Proton donor in catalysis. Substrate-binding positions include 76 to 77 (GN), asparagine 166, asparagine 199, and 217 to 218 (ER). Cysteine 226 (proton acceptor) is an active-site residue. Position 227 to 228 (227 to 228 (GT)) interacts with substrate.

Belongs to the diaminopimelate epimerase family. Homodimer.

It localises to the cytoplasm. It carries out the reaction (2S,6S)-2,6-diaminopimelate = meso-2,6-diaminopimelate. It functions in the pathway amino-acid biosynthesis; L-lysine biosynthesis via DAP pathway; DL-2,6-diaminopimelate from LL-2,6-diaminopimelate: step 1/1. Functionally, catalyzes the stereoinversion of LL-2,6-diaminopimelate (L,L-DAP) to meso-diaminopimelate (meso-DAP), a precursor of L-lysine and an essential component of the bacterial peptidoglycan. This is Diaminopimelate epimerase from Cupriavidus pinatubonensis (strain JMP 134 / LMG 1197) (Cupriavidus necator (strain JMP 134)).